The chain runs to 160 residues: Transcription antitermination protein NusB (160 aa).

It belongs to the NusB family.

Involved in transcription antitermination. Required for transcription of ribosomal RNA (rRNA) genes. Binds specifically to the boxA antiterminator sequence of the ribosomal RNA (rrn) operons. This Rhizobium etli (strain CIAT 652) protein is Transcription antitermination protein NusB.